The following is an 857-amino-acid chain: Autoinducer 2 sensor kinase/phosphatase LuxQ (857 aa).

A run of 2 helical transmembrane segments spans residues Ile-20–Ser-40 and Leu-283–Ile-303. Residues Lys-490–Lys-712 form the Histidine kinase domain. His-493 bears the Phosphohistidine; by autocatalysis mark. Residues Lys-735 to Lys-850 form the Response regulatory domain. Asp-784 is modified (4-aspartylphosphate).

Binds the complex formed by the autoinducer and LuxP.

The protein localises to the cell inner membrane. The enzyme catalyses ATP + protein L-histidine = ADP + protein N-phospho-L-histidine.. Its function is as follows. At low cell density, in absence of autoinducer has a kinase activity, and autophosphorylates on a histidine residue. The phosphoryl group is then transferred to an aspartate residue in the response regulator domain. The phosphoryl group is transferred to LuxU, and ultimately to LuxO. At high cell density, in the presence of autoinducer, the kinase activity is inactivated, and the response regulator domain has a phosphatase activity. This is Autoinducer 2 sensor kinase/phosphatase LuxQ (luxQ) from Vibrio vulnificus (strain CMCP6).